Consider the following 591-residue polypeptide: Aspartate--tRNA ligase (591 aa).

An L-aspartate-binding site is contributed by Glu171. Residues 195-198 (QLFK) are aspartate. L-aspartate is bound at residue Arg217. Residues 217 to 219 (RDE) and Gln226 each bind ATP. His448 is a binding site for L-aspartate. Residue Glu482 participates in ATP binding. Residue Arg489 coordinates L-aspartate. Residue 534-537 (GLDR) participates in ATP binding.

Belongs to the class-II aminoacyl-tRNA synthetase family. Type 1 subfamily. As to quaternary structure, homodimer.

Its subcellular location is the cytoplasm. The enzyme catalyses tRNA(Asp) + L-aspartate + ATP = L-aspartyl-tRNA(Asp) + AMP + diphosphate. In terms of biological role, catalyzes the attachment of L-aspartate to tRNA(Asp) in a two-step reaction: L-aspartate is first activated by ATP to form Asp-AMP and then transferred to the acceptor end of tRNA(Asp). This Aliivibrio fischeri (strain MJ11) (Vibrio fischeri) protein is Aspartate--tRNA ligase.